The sequence spans 104 residues: L-rhamnose mutarotase (104 aa).

Tyrosine 18 lines the substrate pocket. The active-site Proton donor is the histidine 22. Substrate-binding positions include tyrosine 41 and 76-77; that span reads WW. The segment at 85 to 104 is disordered; it reads PSNPDNSPISDALDPVFYLD.

The protein belongs to the rhamnose mutarotase family. As to quaternary structure, homodimer.

The protein resides in the cytoplasm. It catalyses the reaction alpha-L-rhamnose = beta-L-rhamnose. Its pathway is carbohydrate metabolism; L-rhamnose metabolism. Functionally, involved in the anomeric conversion of L-rhamnose. This Pectobacterium atrosepticum (strain SCRI 1043 / ATCC BAA-672) (Erwinia carotovora subsp. atroseptica) protein is L-rhamnose mutarotase.